The chain runs to 255 residues: Myogenic factor 5 (255 aa).

One can recognise a bHLH domain in the interval 83–134 (DRRKAATMRERRRLKKVNQAFETLKRCTTTNPNQRLPKVEILRNAIRYIESL). The disordered stretch occupies residues 226-249 (DTASLSPATSANSQPATPGPSSSR).

Efficient DNA binding requires dimerization with another bHLH protein.

The protein localises to the nucleus. Functionally, acts as a transcriptional activator that promotes transcription of muscle-specific target genes and plays a role in muscle differentiation. Together with MYOG and MYOD1, co-occupies muscle-specific gene promoter core region during myogenesis. Induces fibroblasts to differentiate into myoblasts. Probable sequence specific DNA-binding protein. The polypeptide is Myogenic factor 5 (Myf5) (Mus musculus (Mouse)).